The sequence spans 225 residues: Potassium-transporting ATPase KdpC subunit (225 aa).

The chain crosses the membrane as a helical span at residues 18–38 (ALLVLTVVTGIVYPLVVTGVA). The segment at 134–161 (NSVPGHPVRPEDVPADAVTSSGSGLDPD) is disordered.

The protein belongs to the KdpC family. The system is composed of three essential subunits: KdpA, KdpB and KdpC.

It is found in the cell membrane. Functionally, part of the high-affinity ATP-driven potassium transport (or Kdp) system, which catalyzes the hydrolysis of ATP coupled with the electrogenic transport of potassium into the cytoplasm. This subunit acts as a catalytic chaperone that increases the ATP-binding affinity of the ATP-hydrolyzing subunit KdpB by the formation of a transient KdpB/KdpC/ATP ternary complex. The sequence is that of Potassium-transporting ATPase KdpC subunit from Streptomyces coelicolor (strain ATCC BAA-471 / A3(2) / M145).